We begin with the raw amino-acid sequence, 176 residues long: Sigma intracellular receptor 2 (176 aa).

Residues 1–9 (MGALAARRC) are Cytoplasmic-facing. The chain crosses the membrane as a helical span at residues 10–30 (VEWLLGLYFVSHIPITLFIDL). Positions 10-158 (VEWLLGLYFV…PYLIIPLILL (149 aa)) constitute an EXPERA domain. The Lumenal segment spans residues 31–68 (QAVLPPELYPQEFSNLLRWYSKEFKDPLMQEPPVWFKS). A helical transmembrane segment spans residues 69 to 89 (FLLCELVFQLPFFPIAAYAFF). Cholesterol is bound by residues valine 75 and glutamine 77. Residues 90 to 99 (KGSCRWIRIP) are Cytoplasmic-facing. A helical membrane pass occupies residues 100-120 (AIIYAAHTITTLIPILYTLLF). Topologically, residues 121 to 140 (EDFSKAVAFKGQRPESFRER) are lumenal. A helical membrane pass occupies residues 141–161 (LTLVGVYAPYLIIPLILLLFM). The Cytoplasmic portion of the chain corresponds to 162 to 176 (LRNPYYKYEEKRKKK). Positions 172 to 176 (KRKKK) match the ER retention motif motif.

This sequence belongs to the TMEM97/sigma-2 receptor family. Homodimer. Interacts with NPC1; the interaction impairs NPC1-mediated cholesterol transport. Interacts with PGRMC1 and LDLR; the interaction increases LDL internalization. Interacts with histatin 1/HTN1; the interaction induces HTN1-stimulating wound healing. Interacts with TSPO.

Its subcellular location is the rough endoplasmic reticulum membrane. It localises to the nucleus membrane. In terms of biological role, sigma-2 receptor which contributes to ameliorate dysfunctional cellular processes and slow degenerative progression by regulating cell functions including cholesterol biosynthesis/trafficking, membrane trafficking, autophagy, lipid membrane-bound protein trafficking, and receptor stabilization at the cell surface. Forms a ternary complex with PGRMC1 receptor and low density lipoprotein receptor/LDLR at the plasma membrane, which increases LDLR-mediated LDL cholesterol internalization. Decreases lysosomal sterol transporter NPC1 availability to the cell, probably through NPC1-binding, hence controlling lipid transport, including cholesterol and LBPA, outside of late endosome/lysosome. Binds regio- and stereoselective ligand 20(S)-hydroxycholesterol (20(S)-OHC) which enhances TMEM97-NPC1 interaction and decreases TMEM97-PGRMC1 and TMEM97-TSPO interactions, thereby linking OHC binding to cholesterol homeostasis. Also able to bind cholesterol. Binds histatin 1 (Hst 1)/HN1 salivary peptide at the ER membrane, which is critical for increasing mitochondria-ER contacts and stimulating Hst1 wound healing properties. May alter the activity of some cytochrome P450 proteins. Although shows homologies with sterol isomerases (EXPERA domain), not able to catalyze sterol isomerization. However, may act as sensors of these molecules. Acts as a quality control factor in the ER, promoting the proteolytic degradation of nonproductive and extramitochondrial precursor proteins in the ER membrane thus removing them from the ER surface. In Mus musculus (Mouse), this protein is Sigma intracellular receptor 2.